The chain runs to 69 residues: Conotoxin Eb6.14 (69 aa).

A signal peptide spans 1–17 (VLIIAVLFLTACQLTTA). Residues 18-41 (ETYSRGRQKHRARRSTDKNSKWTR) constitute a propeptide that is removed on maturation. Intrachain disulfides connect Cys43-Cys57, Cys50-Cys61, and Cys56-Cys68.

Belongs to the conotoxin O1 superfamily. Expressed by the venom duct.

The protein resides in the secreted. This chain is Conotoxin Eb6.14 (E1), found in Conus ebraeus (Hebrew cone).